The sequence spans 210 residues: Small ribosomal subunit protein uS3 (210 aa).

Residues 38–106 (LKSFLKKRLY…EVYLNIQEVR (69 aa)) enclose the KH type-2 domain.

This sequence belongs to the universal ribosomal protein uS3 family. As to quaternary structure, part of the 30S ribosomal subunit. Forms a tight complex with proteins S10 and S14.

Functionally, binds the lower part of the 30S subunit head. Binds mRNA in the 70S ribosome, positioning it for translation. The polypeptide is Small ribosomal subunit protein uS3 (Geotalea daltonii (strain DSM 22248 / JCM 15807 / FRC-32) (Geobacter daltonii)).